We begin with the raw amino-acid sequence, 348 residues long: Anthranilate phosphoribosyltransferase (348 aa).

5-phospho-alpha-D-ribose 1-diphosphate is bound by residues Gly84, 87 to 88, Thr92, 94 to 97, 112 to 120, and Ser124; these read GD, NITT, and KHGNRSVSS. Gly84 serves as a coordination point for anthranilate. Thr96 serves as a coordination point for Mg(2+). Residue Asn115 participates in anthranilate binding. Position 170 (Arg170) interacts with anthranilate. Asp228 and Glu229 together coordinate Mg(2+).

Belongs to the anthranilate phosphoribosyltransferase family. Homodimer. Mg(2+) is required as a cofactor.

It catalyses the reaction N-(5-phospho-beta-D-ribosyl)anthranilate + diphosphate = 5-phospho-alpha-D-ribose 1-diphosphate + anthranilate. Its pathway is amino-acid biosynthesis; L-tryptophan biosynthesis; L-tryptophan from chorismate: step 2/5. In terms of biological role, catalyzes the transfer of the phosphoribosyl group of 5-phosphorylribose-1-pyrophosphate (PRPP) to anthranilate to yield N-(5'-phosphoribosyl)-anthranilate (PRA). The chain is Anthranilate phosphoribosyltransferase from Corynebacterium glutamicum (strain R).